A 431-amino-acid polypeptide reads, in one-letter code: Zeaxanthin glucosyltransferase (431 aa).

Belongs to the UDP-glycosyltransferase family.

The enzyme catalyses all-trans-zeaxanthin + 2 UDP-alpha-D-glucose = zeaxanthin bis(beta-D-glucoside) + 2 UDP + 2 H(+). It functions in the pathway carotenoid biosynthesis; zeaxanthin diglucoside biosynthesis. Its function is as follows. Catalyzes the glycosylation reaction which converts zeaxanthin to zeaxanthin bis(beta-D-glucoside). The reaction proceeds in two steps with the monoglucoside as an intermediate. The polypeptide is Zeaxanthin glucosyltransferase (crtX) (Pantoea ananas (Erwinia uredovora)).